A 398-amino-acid polypeptide reads, in one-letter code: Cell adhesion molecule 3 (398 aa).

An N-terminal signal peptide occupies residues 1–24 (MGAPAASLLLLLLLFACCWAPGGA). The region spanning 25-126 (NLSQDDSQPW…VRTAKSLVTV (102 aa)) is the Ig-like V-type domain. At 25-330 (NLSQDDSQPW…PVPSSSSTYH (306 aa)) the chain is on the extracellular side. 3 cysteine pairs are disulfide-bonded: cysteine 50–cysteine 110, cysteine 152–cysteine 209, and cysteine 254–cysteine 299. Ig-like C2-type domains follow at residues 130-228 (PQKP…QRIE) and 233-315 (PTAM…YTLN). An N-linked (GlcNAc...) asparagine glycan is attached at asparagine 290. Residues 331–351 (AIIGGIVAFIVFLLLIMLIFL) traverse the membrane as a helical segment. Topologically, residues 352–398 (GHYLIRHKGTYLTHEAKGSDDAPDADTAIINAEGGQSGGDDKKEYFI) are cytoplasmic. The interval 367 to 398 (AKGSDDAPDADTAIINAEGGQSGGDDKKEYFI) is disordered. Residue serine 388 is modified to Phosphoserine.

It belongs to the nectin family. Homodimer. Can form trans-heterodimers with NECTIN3. Interacts with EPB41L1, DLG3, PALS2 and CASK. In terms of tissue distribution, isoform 1 is expressed mainly in adult and fetal brain. Isoform 2 is highly expressed in adult brain and weakly expressed in placenta. In brain, Isoform 2 is highly expressed in cerebellum.

It localises to the cell membrane. The protein localises to the cell junction. Functionally, involved in cell-cell adhesion. Has both calcium-independent homophilic cell-cell adhesion activity and calcium-independent heterophilic cell-cell adhesion activity with IGSF4, NECTIN1 and NECTIN3. Interaction with EPB41L1 may regulate structure or function of cell-cell junctions. The protein is Cell adhesion molecule 3 (CADM3) of Homo sapiens (Human).